We begin with the raw amino-acid sequence, 518 residues long: MAGGAVVSTGAGKDYPGKLTLFVFFTCVVAATGGLIFGYDIGISGGVTSMDPFLRKFFPEVYRKKQMADKNNQYCKYDNQLLQTFTSSLYLAALVSSFFAATVTRVLGRKWSMFAGGLTFLIGAALNGAAENVAMLIVGRILLGVGVGFANQSVPVYLSEMAPARLRGMLNIGFQLMITIGILAAELINYGTAKIKAGWGWRVSLALAAVPAAIITLGSLFLPDTPNSLIDRGHPEAAERMLRRIRGSDVDVSEEYADLVAASEESKLVQHPWRNILRRKYRAQLTMAICIPFFQQLTGINVIMFYAPVLFDTLGFKSDASLMSAVITGLVNVFATLVSIFTVDRLGRRKLFLQGGAQMVVCQVVVGTLIAVKFGTSGIGDIPKGYAAVVVLFICMYVAGFAWSWGPLGWLVPSEIFPLEIRPAGQSINVSVNMLFTFVIAQAFLTMLCHMKFGLFYFFAGWVVIMTVFIALFLPETKNVPIEEMVLVWKSHWFWRRFIGDHDVHVGANHVSNNKLQP.

At 1-18 the chain is on the cytoplasmic side; sequence MAGGAVVSTGAGKDYPGK. The helical transmembrane segment at 19–39 threads the bilayer; that stretch reads LTLFVFFTCVVAATGGLIFGY. Topologically, residues 40 to 80 are extracellular; that stretch reads DIGISGGVTSMDPFLRKFFPEVYRKKQMADKNNQYCKYDNQ. The helical transmembrane segment at 81–101 threads the bilayer; sequence LLQTFTSSLYLAALVSSFFAA. Residues 102–117 lie on the Cytoplasmic side of the membrane; that stretch reads TVTRVLGRKWSMFAGG. A helical membrane pass occupies residues 118 to 138; it reads LTFLIGAALNGAAENVAMLIV. Residues 139 to 140 lie on the Extracellular side of the membrane; sequence GR. Residues 141–161 form a helical membrane-spanning segment; that stretch reads ILLGVGVGFANQSVPVYLSEM. At 162–167 the chain is on the cytoplasmic side; that stretch reads APARLR. Residues 168 to 188 traverse the membrane as a helical segment; that stretch reads GMLNIGFQLMITIGILAAELI. At 189–202 the chain is on the extracellular side; that stretch reads NYGTAKIKAGWGWR. A helical transmembrane segment spans residues 203–223; it reads VSLALAAVPAAIITLGSLFLP. The Cytoplasmic segment spans residues 224-290; that stretch reads DTPNSLIDRG…YRAQLTMAIC (67 aa). The helical transmembrane segment at 291–311 threads the bilayer; the sequence is IPFFQQLTGINVIMFYAPVLF. The Extracellular segment spans residues 312–322; that stretch reads DTLGFKSDASL. The helical transmembrane segment at 323 to 343 threads the bilayer; sequence MSAVITGLVNVFATLVSIFTV. The Cytoplasmic segment spans residues 344–351; that stretch reads DRLGRRKL. The chain crosses the membrane as a helical span at residues 352-372; that stretch reads FLQGGAQMVVCQVVVGTLIAV. Over 373–387 the chain is Extracellular; that stretch reads KFGTSGIGDIPKGYA. Residues 388–408 form a helical membrane-spanning segment; that stretch reads AVVVLFICMYVAGFAWSWGPL. At 409–427 the chain is on the cytoplasmic side; it reads GWLVPSEIFPLEIRPAGQS. Residues 428-448 traverse the membrane as a helical segment; that stretch reads INVSVNMLFTFVIAQAFLTML. At 449–452 the chain is on the extracellular side; sequence CHMK. A helical membrane pass occupies residues 453–473; sequence FGLFYFFAGWVVIMTVFIALF. The Cytoplasmic segment spans residues 474 to 518; the sequence is LPETKNVPIEEMVLVWKSHWFWRRFIGDHDVHVGANHVSNNKLQP.

Belongs to the major facilitator superfamily. Sugar transporter (TC 2.A.1.1) family. As to expression, highly expressed in roots. Expressed in xylem and sclerenchyma cells of roots. Expressed at low levels in leaves.

The protein resides in the membrane. Functionally, mediates active uptake of hexoses by sugar:proton symport. Can transport glucose, xylose and 3-O-methylglucose. May be involved in the accumulation of monosaccharides required for cell wall synthesis during root development. This is Sugar transport protein MST3 from Oryza sativa subsp. japonica (Rice).